The chain runs to 148 residues: MPSSTFSGTVSTPKLSVAVDMGNPFLNLTVDAFLKIGAVGVTKSLAEDTYKAIDKGSLSKSTLEHALKKLCKEGVYWGAAGGVYIGTEYGIERIRGSRDWKNAMLAGAATGAVLSAVGKKGKDTIVIDAILGGALATASQFVNNHYFY.

The tract at residues 2–73 (PSSTFSGTVS…EHALKKLCKE (72 aa)) is contains 4 beta strands. 3 helical membrane-spanning segments follow: residues 75–91 (VYWG…EYGI), 102–118 (NAML…SAVG), and 125–142 (IVID…SQFV).

This sequence belongs to the Tim17/Tim22/Tim23 family. Plastid outer envelope porin OEP16 (TC 1.B.30) subfamily. As to quaternary structure, homodimer and oligomers in membrane. Forms large complexes including TOC33, pPORA and OEP161 during pPORA import into plastids at the plastid envelope membrane. In terms of tissue distribution, expressed predominantly in leaves and cotyledons.

Its subcellular location is the plastid. It localises to the chloroplast outer membrane. The protein resides in the etioplast membrane. With respect to regulation, stimulated by GTP. In terms of biological role, voltage-dependent high-conductance channel with a slight cation-selectivity; selective for amino acids but excludes triosephosphates or uncharged sugars. Non-essential amino acid-selective channel protein and translocation pore for NADPH:protochlorophyllide oxidoreductase A (PORA) and possibly PORB. Involved in PORA precursor (pPORA) import and thus confers photoprotection onto etiolated seedlings during greening. This is Outer envelope pore protein 16-1, chloroplastic (OEP161) from Arabidopsis thaliana (Mouse-ear cress).